A 205-amino-acid polypeptide reads, in one-letter code: Transcriptional regulatory protein PdtaR (205 aa).

Residues 15–129 enclose the Response regulatory domain; that stretch reads RVLIAEDEAL…DLIPAIELAV (115 aa). A 4-aspartylphosphate modification is found at D65. The 62-residue stretch at 135-196 folds into the ANTAR domain; that stretch reads ITALEGEVAT…TMKRVAEVVL (62 aa).

Post-translationally, phosphorylated and activated by PdtaS.

Its subcellular location is the cytoplasm. In terms of biological role, member of the two-component regulatory system PdtaR/PdtaS. This two-component system plays an essential role in mycobacterial adaptation to poor nutrient conditions. PdtaR probably acts at the level of transcriptional antitermination rather than transcriptional initiation. Functionally, in addition, the PdtaR/PdtaS two-component system controls copper and nitric oxide (NO) resistance downstream of the intramembrane protease Rip1. This coupled Rip1/PdtaS/PdtaR circuit controls NO resistance and acute lung infection in mice by relieving PdtaR/PdtaS-mediated repression of isonitrile chalkophore biosynthesis. Two signals are required to fully inactivate the PdtaR/PdtaS system and mediate NO resistance: a cytoplasmic inhibitory signal through the PdtaS kinase mediated by direct sensing of NO and the production of PPE1-5', an NO-induced small RNA, to sequester PdtaR. The sequence is that of Transcriptional regulatory protein PdtaR (pdtaR) from Mycobacterium tuberculosis (strain CDC 1551 / Oshkosh).